The sequence spans 352 residues: tRNA (guanine-N(1)-)-methyltransferase (352 aa).

S-adenosyl-L-methionine contacts are provided by residues G109 and 129-134; that span reads IGDYVL.

The protein belongs to the RNA methyltransferase TrmD family. Homodimer.

The protein resides in the cytoplasm. The enzyme catalyses guanosine(37) in tRNA + S-adenosyl-L-methionine = N(1)-methylguanosine(37) in tRNA + S-adenosyl-L-homocysteine + H(+). Specifically methylates guanosine-37 in various tRNAs. The polypeptide is tRNA (guanine-N(1)-)-methyltransferase (Chlamydia trachomatis serovar A (strain ATCC VR-571B / DSM 19440 / HAR-13)).